The primary structure comprises 262 residues: Type III pantothenate kinase (262 aa).

Residue 6–13 participates in ATP binding; it reads DAGNTNMV. Substrate contacts are provided by residues Tyr100 and 107–110; that span reads GADR. The active-site Proton acceptor is the Asp109. Position 129 (Asp129) interacts with K(+). Thr132 is an ATP binding site. Thr184 lines the substrate pocket.

It belongs to the type III pantothenate kinase family. As to quaternary structure, homodimer. It depends on NH4(+) as a cofactor. K(+) is required as a cofactor.

It localises to the cytoplasm. The catalysed reaction is (R)-pantothenate + ATP = (R)-4'-phosphopantothenate + ADP + H(+). It participates in cofactor biosynthesis; coenzyme A biosynthesis; CoA from (R)-pantothenate: step 1/5. Catalyzes the phosphorylation of pantothenate (Pan), the first step in CoA biosynthesis. The sequence is that of Type III pantothenate kinase from Clostridium tetani (strain Massachusetts / E88).